Reading from the N-terminus, the 177-residue chain is Phycoerythrin beta subunit (177 aa).

(2R,3E)-phycocyanobilin contacts are provided by Y18, K28, N35, and D39. C50, D54, and C61 together coordinate 15,16-dihydrobiliverdin. Positions 77, 82, 84, and 85 each coordinate (2R,3E)-phycocyanobilin. The 15,16-dihydrobiliverdin site is built by R129, Q148, and K149. Positions 154, 156, and 158 each coordinate (2R,3E)-phycocyanobilin.

The protein belongs to the phycobiliprotein family. As to quaternary structure, heterotetramer of 2 identical alpha chains and 2 identical beta chains which form 2 alpha-beta heterodimers within the heterotetramer. The two alpha-beta heterodimers are rotated to an open configuration in contrast to the closed configuration found in other cryptophyte species due to the insertion of a single amino acid, 'Asp-65', in a conserved region of the alpha chain. In the open form, the central chromophores are not in physical contact but are separated by a water-filled channel. Post-translationally, contains three phycocyanobilin chromophores and one 15,16-dihydrobiliverdin chromophore with binding of the phycocyanobilin chromophores mediated by both the alpha and beta subunits.

The protein resides in the plastid. It localises to the chloroplast thylakoid membrane. Its function is as follows. Light-harvesting photosynthetic bile pigment-protein from the phycobiliprotein complex. In Hemiselmis virescens, this protein is Phycoerythrin beta subunit.